Reading from the N-terminus, the 926-residue chain is Alpha-aminoadipic semialdehyde synthase, mitochondrial (926 aa).

The N-terminal 27 residues, 1 to 27 (MLQVHRTGLGRLGVSLSKGLHHKAVLA), are a transit peptide targeting the mitochondrion. A lysine-ketoglutarate reductase region spans residues 28–476 (VRREDVNAWE…ESRERAQSLS (449 aa)). 2 positions are modified to N6-acetyllysine: Lys48 and Lys56. Lys93 carries the N6-acetyllysine; alternate modification. Residue Lys93 is modified to N6-succinyllysine; alternate. The residue at position 128 (Lys128) is an N6-acetyllysine. Lys138 is subject to N6-acetyllysine; alternate. At Lys138 the chain carries N6-succinyllysine; alternate. Residue Lys274 is modified to N6-succinyllysine. Lys286 is subject to N6-acetyllysine; alternate. The residue at position 286 (Lys286) is an N6-succinyllysine; alternate. Lys333 carries the post-translational modification N6-succinyllysine. N6-acetyllysine; alternate is present on Lys458. An N6-succinyllysine; alternate modification is found at Lys458. The segment at 477 to 926 (MGTRRKVLVL…IYTTQSTIKP (450 aa)) is saccharopine dehydrogenase. NAD(+) contacts are provided by Ser488, Asp512, and Gln516. The residue at position 523 (Lys523) is an N6-acetyllysine; alternate. Position 523 is an N6-succinyllysine; alternate (Lys523). Ile533 provides a ligand contact to NAD(+). At Lys535 the chain carries N6-acetyllysine; alternate. N6-succinyllysine; alternate is present on Lys535. The NAD(+) site is built by Leu554, Ala576, and Ser577. 577-578 (SY) contacts L-saccharopine. Lys584 is modified (N6-acetyllysine; alternate). Lys584 bears the N6-succinyllysine; alternate mark. Residues Leu603, Asp604, and Pro605 each contribute to the NAD(+) site. Asp604 is a binding site for L-saccharopine. Position 703 (Arg703) interacts with L-saccharopine. An N6-acetyllysine modification is found at Lys707. 724–726 (TLR) contributes to the L-saccharopine binding site. An N6-succinyllysine modification is found at Lys732. Lys739 is subject to N6-acetyllysine. Position 761 is an N6-acetyllysine; alternate (Lys761). An N6-succinyllysine; alternate modification is found at Lys761. Lys780 carries the N6-acetyllysine modification.

In the N-terminal section; belongs to the AlaDH/PNT family. This sequence in the C-terminal section; belongs to the saccharopine dehydrogenase family. As to quaternary structure, homotetramer. As to expression, expressed in all 16 tissues examined with highest expression in the liver.

The protein localises to the mitochondrion. It catalyses the reaction L-saccharopine + NADP(+) + H2O = L-lysine + 2-oxoglutarate + NADPH + H(+). The enzyme catalyses L-saccharopine + NAD(+) + H2O = (S)-2-amino-6-oxohexanoate + L-glutamate + NADH + H(+). It participates in amino-acid degradation; L-lysine degradation via saccharopine pathway; glutaryl-CoA from L-lysine: step 1/6. The protein operates within amino-acid degradation; L-lysine degradation via saccharopine pathway; glutaryl-CoA from L-lysine: step 2/6. Its function is as follows. Bifunctional enzyme that catalyzes the first two steps in lysine degradation. The polypeptide is Alpha-aminoadipic semialdehyde synthase, mitochondrial (Homo sapiens (Human)).